The following is a 399-amino-acid chain: Acetylornithine aminotransferase (399 aa).

Pyridoxal 5'-phosphate contacts are provided by residues G102–A103 and F135. A N(2)-acetyl-L-ornithine-binding site is contributed by R138. D220–Q223 contacts pyridoxal 5'-phosphate. At K249 the chain carries N6-(pyridoxal phosphate)lysine. S277 is a binding site for N(2)-acetyl-L-ornithine. T278 serves as a coordination point for pyridoxal 5'-phosphate.

The protein belongs to the class-III pyridoxal-phosphate-dependent aminotransferase family. ArgD subfamily. Homodimer. Requires pyridoxal 5'-phosphate as cofactor.

The protein resides in the cytoplasm. The catalysed reaction is N(2)-acetyl-L-ornithine + 2-oxoglutarate = N-acetyl-L-glutamate 5-semialdehyde + L-glutamate. The protein operates within amino-acid biosynthesis; L-arginine biosynthesis; N(2)-acetyl-L-ornithine from L-glutamate: step 4/4. This Oceanobacillus iheyensis (strain DSM 14371 / CIP 107618 / JCM 11309 / KCTC 3954 / HTE831) protein is Acetylornithine aminotransferase.